The following is a 519-amino-acid chain: Polyamine aminopropyltransferase (519 aa).

The next 7 membrane-spanning stretches (helical) occupy residues 17-37 (LLLVSVAICAASGLVYELALV), 53-73 (LIVAGYVAALGVGAILVKPFL), 86-106 (LLGLIGGLSALVLYMTFAVVG), 109-129 (LWMLVLATALIGILVGAELPL), 158-178 (LGALLGGLAWPFILLPWLGMM), 180-200 (GAAAAGMINLLAALFVGCVLL), and 208-228 (QFIRAVVALLVAIAVLGTVLV). The segment at 200-463 (LRHLLPRAQF…FQLCGPEGTE (264 aa)) is spermidine synthase. The PABS domain maps to 225–459 (TVLVRSDGIV…GDWGFQLCGP (235 aa)). Q255 lines the S-methyl-5'-thioadenosine pocket. A spermidine-binding site is contributed by D307. S-methyl-5'-thioadenosine-binding positions include E326 and 358–359 (DA). The active-site Proton acceptor is the D379.

This sequence belongs to the spermidine/spermine synthase family. Homodimer or homotetramer.

The protein localises to the cell membrane. It carries out the reaction S-adenosyl 3-(methylsulfanyl)propylamine + putrescine = S-methyl-5'-thioadenosine + spermidine + H(+). It functions in the pathway amine and polyamine biosynthesis; spermidine biosynthesis; spermidine from putrescine: step 1/1. Its function is as follows. Catalyzes the irreversible transfer of a propylamine group from the amino donor S-adenosylmethioninamine (decarboxy-AdoMet) to putrescine (1,4-diaminobutane) to yield spermidine. The protein is Polyamine aminopropyltransferase of Corynebacterium efficiens (strain DSM 44549 / YS-314 / AJ 12310 / JCM 11189 / NBRC 100395).